Here is an 802-residue protein sequence, read N- to C-terminus: Leucine--tRNA ligase (802 aa).

Positions 40–51 match the 'HIGH' region motif; that stretch reads PYPSGAGLHVGH. Residues 576–580 carry the 'KMSKS' region motif; that stretch reads KMSKS. Position 579 (Lys-579) interacts with ATP.

Belongs to the class-I aminoacyl-tRNA synthetase family.

It localises to the cytoplasm. The catalysed reaction is tRNA(Leu) + L-leucine + ATP = L-leucyl-tRNA(Leu) + AMP + diphosphate. The polypeptide is Leucine--tRNA ligase (Bacillus cytotoxicus (strain DSM 22905 / CIP 110041 / 391-98 / NVH 391-98)).